The sequence spans 312 residues: Malate dehydrogenase (312 aa).

NAD(+) contacts are provided by residues 7 to 13 (GAAGGIG) and Asp-34. Substrate-binding residues include Arg-81 and Arg-87. NAD(+) contacts are provided by residues Asn-94 and 117–119 (ITN). Residues Asn-119 and Arg-153 each coordinate substrate. Catalysis depends on His-177, which acts as the Proton acceptor. An NAD(+)-binding site is contributed by Met-227.

It belongs to the LDH/MDH superfamily. MDH type 1 family. Homodimer.

The catalysed reaction is (S)-malate + NAD(+) = oxaloacetate + NADH + H(+). In terms of biological role, catalyzes the reversible oxidation of malate to oxaloacetate. This Escherichia coli O6:K15:H31 (strain 536 / UPEC) protein is Malate dehydrogenase.